The primary structure comprises 296 residues: Aspartate and glycine-rich protein (296 aa).

Over residues 1–77 (GDGENGNGNG…GNGNGNGNGN (77 aa)) the composition is skewed to gly residues. Disordered regions lie at residues 1–219 (GDGE…DNGG) and 233–296 (RARA…YTSY). 2 stretches are compositionally biased toward acidic residues: residues 80-96 (FDDD…DDWN) and 103-194 (NGDD…DDRW). Over residues 198-210 (NGNGNGNGNGNGN) the composition is skewed to gly residues. A compositionally biased stretch (low complexity) spans 233–243 (RARAAASAAGR). Positions 244–259 (SRGGSGGSGGSGGSGG) are enriched in gly residues. The span at 270-281 (RAFASARASSGN) shows a compositional bias: low complexity.

In terms of tissue distribution, component of the acid-soluble and acid-insoluble organic matrix of calcified shell layers (at protein level).

It localises to the secreted. The protein is Aspartate and glycine-rich protein of Haliotis asinina (Donkey's ear abalone).